A 462-amino-acid chain; its full sequence is Putative F-box protein At1g12855 (462 aa).

Residues 1 to 22 (MESREDSFISKEKKSTMKKEKQ) show a composition bias toward basic and acidic residues. The disordered stretch occupies residues 1–59 (MESREDSFISKEKKSTMKKEKQAIASQRNRRRVIKNRGNGKRLIASLSQRKRRRIPRGR). Residues 28–40 (RNRRRVIKNRGNG) are compositionally biased toward basic residues. One can recognise an F-box domain in the interval 65–110 (VFAPSSLPNDVVEEIFLRLPVKAIIQLKSLSKQWRSTIESRSFEER).

The chain is Putative F-box protein At1g12855 from Arabidopsis thaliana (Mouse-ear cress).